The sequence spans 333 residues: Oxidoreductase AN1596 (333 aa).

Belongs to the NmrA-type oxidoreductase family.

It functions in the pathway secondary metabolite biosynthesis; terpenoid biosynthesis. Oxidoreductase; part of the gene cluster that mediates the biosynthesis of the diterpene ent-pimara-8(14),15-diene (PD). Within the cluster, the HMG-CoA reductase AN1593 functions in the mevalonate pathway, which produces isoprenoid precursors. The geranylgeranyl pyrophosphate (GGPP) synthase AN1592 is needed in the formation of GGPP, the precursor for diterpenes. Lastly, the pimaradiene synthase pbcA performs the 2 cyclization steps that convert GGPP to ent-pimara-8(14),15-diene. The putative roles of the remaining cluster enzymes in ent-pimara-8(14),15-diene biosynthesis is unclear. The cytochrome P450 monooxygenase AN1598, the glutathione S-transferase AN1595, the oxidoreductases AN1596 and AN1597 probably function as decorative enzymes. It is possible that in biological conditions the compound is oxidized to ent-pimara-8(14),15-dien-19-oic acid, which is a bioactive diterpene compound predominant in many plant extracts. The sequence is that of Oxidoreductase AN1596 from Emericella nidulans (strain FGSC A4 / ATCC 38163 / CBS 112.46 / NRRL 194 / M139) (Aspergillus nidulans).